A 118-amino-acid polypeptide reads, in one-letter code: UPF0102 protein DICTH_1420 (118 aa).

It belongs to the UPF0102 family.

The sequence is that of UPF0102 protein DICTH_1420 from Dictyoglomus thermophilum (strain ATCC 35947 / DSM 3960 / H-6-12).